A 561-amino-acid polypeptide reads, in one-letter code: Dihydroxy-acid dehydratase (561 aa).

Asp80 provides a ligand contact to Mg(2+). Cys121 serves as a coordination point for [2Fe-2S] cluster. Residues Asp122 and Lys123 each contribute to the Mg(2+) site. An N6-carboxylysine modification is found at Lys123. [2Fe-2S] cluster is bound at residue Cys194. Residue Glu448 participates in Mg(2+) binding. Ser474 functions as the Proton acceptor in the catalytic mechanism.

Belongs to the IlvD/Edd family. As to quaternary structure, homodimer. Requires [2Fe-2S] cluster as cofactor. Mg(2+) is required as a cofactor.

It carries out the reaction (2R)-2,3-dihydroxy-3-methylbutanoate = 3-methyl-2-oxobutanoate + H2O. The catalysed reaction is (2R,3R)-2,3-dihydroxy-3-methylpentanoate = (S)-3-methyl-2-oxopentanoate + H2O. Its pathway is amino-acid biosynthesis; L-isoleucine biosynthesis; L-isoleucine from 2-oxobutanoate: step 3/4. It participates in amino-acid biosynthesis; L-valine biosynthesis; L-valine from pyruvate: step 3/4. In terms of biological role, functions in the biosynthesis of branched-chain amino acids. Catalyzes the dehydration of (2R,3R)-2,3-dihydroxy-3-methylpentanoate (2,3-dihydroxy-3-methylvalerate) into 2-oxo-3-methylpentanoate (2-oxo-3-methylvalerate) and of (2R)-2,3-dihydroxy-3-methylbutanoate (2,3-dihydroxyisovalerate) into 2-oxo-3-methylbutanoate (2-oxoisovalerate), the penultimate precursor to L-isoleucine and L-valine, respectively. The chain is Dihydroxy-acid dehydratase from Anaeromyxobacter sp. (strain Fw109-5).